Reading from the N-terminus, the 244-residue chain is Probable histone-lysine N-methyltransferase set-23 (244 aa).

The Pre-SET domain maps to 25–86 (EGCNCEAECS…SCRNRVVQCG (62 aa)). Positions 27, 29, 33, 39, 41, 65, 69, 71, and 78 each coordinate Zn(2+). Residues 89 to 213 (KKLEIFSTCE…RGEELCYDYG (125 aa)) enclose the SET domain. S-adenosyl-L-methionine is bound by residues 101 to 103 (KGF), Asp-141, Tyr-143, Arg-170, and 173 to 174 (NH). Positions 176, 225, 227, and 232 each coordinate Zn(2+). The Post-SET domain maps to 221–237 (NRKLCLCKSEKCRKYLP).

This sequence belongs to the class V-like SAM-binding methyltransferase superfamily. Histone-lysine methyltransferase family. Suvar3-9 subfamily.

It localises to the nucleus. The protein localises to the chromosome. The enzyme catalyses L-lysyl-[histone] + S-adenosyl-L-methionine = N(6)-methyl-L-lysyl-[histone] + S-adenosyl-L-homocysteine + H(+). Functionally, probable histone methyltransferase. Required for embryonic development. The polypeptide is Probable histone-lysine N-methyltransferase set-23 (set-23) (Caenorhabditis elegans).